A 297-amino-acid polypeptide reads, in one-letter code: Lysenin (297 aa).

The N-terminal cap domain stretch occupies residues 10–33 (EQIEVDVVAVWKEGYVYENRGSTS). Residues 34–107 (VDQKITITKG…SKVIEHTITI (74 aa)) are beta-hairpin domain. The interval 108–156 (PPTSKFTRWQLNADVGGADIEYMYLIDEVTPIGGTQSIPQVITSRAKII) is N-terminal cap domain. A C-terminal receptor-binding domain region spans residues 157–297 (VGRQIILGKT…EDKWILEVVG (141 aa)). Lysine 185, serine 227, tyrosine 233, and tyrosine 282 together coordinate an N-(acyl)-sphingosylphosphocholine. Cysteine 272 and cysteine 283 are oxidised to a cystine.

Belongs to the lysenin family. Binds to sphingomyelin as a monomer by using its C-terminal domain. Forms a nonamer when sphingomyelin/lysenin ratio is lower than ca 500. Oligomerization, but not binding, is influenced by the fluidity of sphingomyelin. As to expression, expressed by coelomocytes.

The protein localises to the secreted. The protein resides in the target cell membrane. Functionally, pore-forming toxin that defensively acts against parasitic microorganisms by forming pores in sphingomyelin-containing membranes. Has hemolytic activity and is also cytotoxic to spermatozoa of some species of invertebrates and many species of vertebrates and to amphibian larvae, guinea pig polymorphonuclear leukocytes, chicken fibroblasts, normal spleen cells and various tumor cells. Is lethal for various species of reptiles, amphibian, birds and mammals. Induces smooth muscle contraction. It binds sphingomyelin and induces hemolysis in the same manner as lysenin-related protein 2, and is 10-fold more effective than lysenin-related protein 1. This chain is Lysenin, found in Eisenia fetida (Red wiggler worm).